The primary structure comprises 95 residues: Aspartyl/glutamyl-tRNA(Asn/Gln) amidotransferase subunit C (95 aa).

This sequence belongs to the GatC family. In terms of assembly, heterotrimer of A, B and C subunits.

It carries out the reaction L-glutamyl-tRNA(Gln) + L-glutamine + ATP + H2O = L-glutaminyl-tRNA(Gln) + L-glutamate + ADP + phosphate + H(+). The enzyme catalyses L-aspartyl-tRNA(Asn) + L-glutamine + ATP + H2O = L-asparaginyl-tRNA(Asn) + L-glutamate + ADP + phosphate + 2 H(+). Allows the formation of correctly charged Asn-tRNA(Asn) or Gln-tRNA(Gln) through the transamidation of misacylated Asp-tRNA(Asn) or Glu-tRNA(Gln) in organisms which lack either or both of asparaginyl-tRNA or glutaminyl-tRNA synthetases. The reaction takes place in the presence of glutamine and ATP through an activated phospho-Asp-tRNA(Asn) or phospho-Glu-tRNA(Gln). The chain is Aspartyl/glutamyl-tRNA(Asn/Gln) amidotransferase subunit C from Dinoroseobacter shibae (strain DSM 16493 / NCIMB 14021 / DFL 12).